The following is a 153-amino-acid chain: D-aminoacyl-tRNA deacylase (153 aa).

Positions 137 to 138 (GP) match the Gly-cisPro motif, important for rejection of L-amino acids motif.

The protein belongs to the DTD family. As to quaternary structure, homodimer.

The protein localises to the cytoplasm. It carries out the reaction glycyl-tRNA(Ala) + H2O = tRNA(Ala) + glycine + H(+). The catalysed reaction is a D-aminoacyl-tRNA + H2O = a tRNA + a D-alpha-amino acid + H(+). Its function is as follows. An aminoacyl-tRNA editing enzyme that deacylates mischarged D-aminoacyl-tRNAs. Also deacylates mischarged glycyl-tRNA(Ala), protecting cells against glycine mischarging by AlaRS. Acts via tRNA-based rather than protein-based catalysis; rejects L-amino acids rather than detecting D-amino acids in the active site. By recycling D-aminoacyl-tRNA to D-amino acids and free tRNA molecules, this enzyme counteracts the toxicity associated with the formation of D-aminoacyl-tRNA entities in vivo and helps enforce protein L-homochirality. The polypeptide is D-aminoacyl-tRNA deacylase (Dehalococcoides mccartyi (strain ATCC BAA-2100 / JCM 16839 / KCTC 5957 / BAV1)).